Here is a 479-residue protein sequence, read N- to C-terminus: Membrane-bound lytic murein transglycosylase F (479 aa).

The first 18 residues, Met-1–Ala-18, serve as a signal peptide directing secretion. A non-LT domain region spans residues Ile-19–Leu-266. An LT domain region spans residues Asn-267–Arg-479. The active site involves Glu-311.

It in the N-terminal section; belongs to the bacterial solute-binding protein 3 family. In the C-terminal section; belongs to the transglycosylase Slt family.

The protein localises to the cell outer membrane. It carries out the reaction Exolytic cleavage of the (1-&gt;4)-beta-glycosidic linkage between N-acetylmuramic acid (MurNAc) and N-acetylglucosamine (GlcNAc) residues in peptidoglycan, from either the reducing or the non-reducing ends of the peptidoglycan chains, with concomitant formation of a 1,6-anhydrobond in the MurNAc residue.. Its function is as follows. Murein-degrading enzyme that degrades murein glycan strands and insoluble, high-molecular weight murein sacculi, with the concomitant formation of a 1,6-anhydromuramoyl product. Lytic transglycosylases (LTs) play an integral role in the metabolism of the peptidoglycan (PG) sacculus. Their lytic action creates space within the PG sacculus to allow for its expansion as well as for the insertion of various structures such as secretion systems and flagella. The sequence is that of Membrane-bound lytic murein transglycosylase F from Histophilus somni (strain 2336) (Haemophilus somnus).